Consider the following 119-residue polypeptide: Small ribosomal subunit protein uS10 (119 aa).

N-acetylalanine is present on Ala-2. Lys-4 is covalently cross-linked (Glycyl lysine isopeptide (Lys-Gly) (interchain with G-Cter in ubiquitin)). N6-succinyllysine; alternate is present on Lys-8. A Glycyl lysine isopeptide (Lys-Gly) (interchain with G-Cter in ubiquitin); alternate cross-link involves residue Lys-8. Phosphothreonine is present on Thr-9. Residues Lys-34 and Lys-75 each carry the N6-acetyllysine modification. Residue Ser-93 is modified to Phosphoserine.

The protein belongs to the universal ribosomal protein uS10 family. In terms of assembly, component of the 40S small ribosomal subunit. Post-translationally, polyubiquitinated by ZNF598 via 'Lys-63'-linked ubiquitin chains when a ribosome has stalled, initiating the ribosome quality control (RQC) pathway to degrade the potentially detrimental aberrant nascent polypeptide. Deubiquitinated by OTUD3 and USP21, antagonizing ZNF598 activity. In terms of processing, ufmylated by UFL1.

It is found in the cytoplasm. Functionally, component of the small ribosomal subunit. The ribosome is a large ribonucleoprotein complex responsible for the synthesis of proteins in the cell. The protein is Small ribosomal subunit protein uS10 (Rps20) of Rattus norvegicus (Rat).